The sequence spans 382 residues: Na(+)/H(+) antiporter NhaA 2 (382 aa).

11 helical membrane passes run 7-27, 58-78, 94-114, 124-144, 153-173, 178-198, 199-219, 255-275, 291-311, 327-347, and 361-381; these read MALSETFPGILLIFFTFLALL, LDLWINDGLIAIFFLCIGLEL, SLPIFGALGGMITPALIFAAI, GWAIPTATDIAFAVGILMLLG, LFLLSLAIFDDLGAIVIIALF, LSALAIIICLFCIFALLLLNY, YHITHLSLYVLVGVVLWIAML, NPWVVYFILPLFAFANAGIDI, IILGLFLGKQLGVFIFCFIAI, FYGICILTGIGFTMSLFIDGL, and LAILIASFLSAIVGFIYLKIV.

Belongs to the NhaA Na(+)/H(+) (TC 2.A.33) antiporter family.

It localises to the cell inner membrane. The enzyme catalyses Na(+)(in) + 2 H(+)(out) = Na(+)(out) + 2 H(+)(in). Na(+)/H(+) antiporter that extrudes sodium in exchange for external protons. In Campylobacter jejuni subsp. doylei (strain ATCC BAA-1458 / RM4099 / 269.97), this protein is Na(+)/H(+) antiporter NhaA 2.